The chain runs to 154 residues: 6,7-dimethyl-8-ribityllumazine synthase (154 aa).

5-amino-6-(D-ribitylamino)uracil contacts are provided by residues Phe22, 56 to 58 (AFE), and 80 to 82 (TVI). Position 85-86 (85-86 (AT)) interacts with (2S)-2-hydroxy-3-oxobutyl phosphate. Residue His88 is the Proton donor of the active site. Phe113 provides a ligand contact to 5-amino-6-(D-ribitylamino)uracil. Arg127 serves as a coordination point for (2S)-2-hydroxy-3-oxobutyl phosphate.

This sequence belongs to the DMRL synthase family. As to quaternary structure, forms an icosahedral capsid composed of 60 subunits, arranged as a dodecamer of pentamers.

The enzyme catalyses (2S)-2-hydroxy-3-oxobutyl phosphate + 5-amino-6-(D-ribitylamino)uracil = 6,7-dimethyl-8-(1-D-ribityl)lumazine + phosphate + 2 H2O + H(+). It functions in the pathway cofactor biosynthesis; riboflavin biosynthesis; riboflavin from 2-hydroxy-3-oxobutyl phosphate and 5-amino-6-(D-ribitylamino)uracil: step 1/2. Functionally, catalyzes the formation of 6,7-dimethyl-8-ribityllumazine by condensation of 5-amino-6-(D-ribitylamino)uracil with 3,4-dihydroxy-2-butanone 4-phosphate. This is the penultimate step in the biosynthesis of riboflavin. This is 6,7-dimethyl-8-ribityllumazine synthase from Bacillus pumilus (strain SAFR-032).